The chain runs to 129 residues: uncharacterized protein (129 aa).

This is an uncharacterized protein from Streptococcus pyogenes serotype M6 (strain ATCC BAA-946 / MGAS10394).